The sequence spans 292 residues: Bifunctional protein FolD (292 aa).

NADP(+) contacts are provided by residues 166–168, S191, and I232; that span reads GRS.

Belongs to the tetrahydrofolate dehydrogenase/cyclohydrolase family. As to quaternary structure, homodimer.

It carries out the reaction (6R)-5,10-methylene-5,6,7,8-tetrahydrofolate + NADP(+) = (6R)-5,10-methenyltetrahydrofolate + NADPH. The enzyme catalyses (6R)-5,10-methenyltetrahydrofolate + H2O = (6R)-10-formyltetrahydrofolate + H(+). Its pathway is one-carbon metabolism; tetrahydrofolate interconversion. In terms of biological role, catalyzes the oxidation of 5,10-methylenetetrahydrofolate to 5,10-methenyltetrahydrofolate and then the hydrolysis of 5,10-methenyltetrahydrofolate to 10-formyltetrahydrofolate. The protein is Bifunctional protein FolD of Wolbachia pipientis wMel.